The chain runs to 914 residues: TRPM8 channel-associated factor 3 (914 aa).

Residues 533–832 (NSWVSTGLYL…TYLQLQEGFG (300 aa)) enclose the Peptidase M60 domain.

It belongs to the TCAF family. As to expression, prostate-specific. Present in both dorso-lateral and anterior prostate.

In terms of biological role, may play a role in the regulation of the cation channel TRPM8 activity. The protein is TRPM8 channel-associated factor 3 of Mus musculus (Mouse).